A 210-amino-acid polypeptide reads, in one-letter code: Glutathione S-transferase P (210 aa).

A GST N-terminal domain is found at 2–81; it reads PPYTIVYFPV…HLGRSLGLYG (80 aa). The residue at position 4 (Tyr-4) is a Phosphotyrosine; by EGFR. Residues Tyr-8, Arg-14, Trp-39, Lys-45, and 52-53 contribute to the glutathione site; that span reads QL. Phosphothreonine is present on Thr-62. 65-66 contacts glutathione; sequence QS. The GST C-terminal domain maps to 83 to 204; that stretch reads DQKEAALVDM…SSPDHLNRPI (122 aa). Residues Lys-103 and Lys-116 each carry the N6-succinyllysine modification. Residue Lys-128 is modified to N6-acetyllysine.

This sequence belongs to the GST superfamily. Pi family. Homodimer. Interacts with CDK5. In terms of tissue distribution, present in kidney, lung, testis and placenta, very low levels in liver.

The protein resides in the cytoplasm. The protein localises to the mitochondrion. It is found in the nucleus. It catalyses the reaction RX + glutathione = an S-substituted glutathione + a halide anion + H(+). The enzyme catalyses prostaglandin J2 + glutathione = prostaglandin J2-S-(R)-glutathione. The catalysed reaction is prostaglandin J2 + glutathione = prostaglandin J2-S-(S)-glutathione. It carries out the reaction prostaglandin A2 + glutathione = prostaglandin A2-S-(S)-glutathione. It catalyses the reaction 11(S)-hydroxy-14(S),15(S)-epoxy-(5Z,8Z,12E)-eicosatrienoate + glutathione = (11S,15S)-dihydroxy-14(R)-S-glutathionyl-(5Z,8Z,12E)-eicosatrienoate. Functionally, conjugation of reduced glutathione to a wide number of exogenous and endogenous hydrophobic electrophiles. Involved in the formation of glutathione conjugates of both prostaglandin A2 (PGA2) and prostaglandin J2 (PGJ2). Participates in the formation of novel hepoxilin regioisomers. Negatively regulates CDK5 activity via p25/p35 translocation to prevent neurodegeneration. The sequence is that of Glutathione S-transferase P from Rattus norvegicus (Rat).